The sequence spans 237 residues: Large ribosomal subunit protein uL1 (237 aa).

This sequence belongs to the universal ribosomal protein uL1 family. In terms of assembly, part of the 50S ribosomal subunit.

Binds directly to 23S rRNA. The L1 stalk is quite mobile in the ribosome, and is involved in E site tRNA release. Functionally, protein L1 is also a translational repressor protein, it controls the translation of the L11 operon by binding to its mRNA. In Chloroflexus aurantiacus (strain ATCC 29364 / DSM 637 / Y-400-fl), this protein is Large ribosomal subunit protein uL1.